The sequence spans 117 residues: UPF0295 protein RBAM_008830 (117 aa).

2 helical membrane-spanning segments follow: residues 13-33 (TFAL…LFFK) and 41-61 (LFMI…FWIG).

The protein belongs to the UPF0295 family.

Its subcellular location is the cell membrane. The protein is UPF0295 protein RBAM_008830 of Bacillus velezensis (strain DSM 23117 / BGSC 10A6 / LMG 26770 / FZB42) (Bacillus amyloliquefaciens subsp. plantarum).